Here is a 693-residue protein sequence, read N- to C-terminus: Oxysterol-binding protein-related protein 2B (693 aa).

Positions 1–15 are enriched in polar residues; sequence MPLTRSKSLPATENG. The segment at 1–22 is disordered; the sequence is MPLTRSKSLPATENGGSDRETL. A PH domain is found at 25 to 154; sequence GRSVAGILYK…WLQALASTRG (130 aa). A coiled-coil region spans residues 207 to 239; it reads EVQEQIKLLHEERKKLLDALRQLEMANLEAEAS. 2 disordered regions span residues 256–298 and 600–639; these read LGRG…GEPD and EKLPPTDSRLRPDQRHLENGEYEKANEEKQRLERRQRMSR. Residues 274–284 are compositionally biased toward acidic residues; the sequence is QEFEDISEEDE. Basic and acidic residues-rich tracts occupy residues 285–294 and 600–635; these read ASFHDTKESF and EKLPPTDSRLRPDQRHLENGEYEKANEEKQRLERRQ. Residues 612-643 are a coiled coil; sequence DQRHLENGEYEKANEEKQRLERRQRMSRQIQE.

This sequence belongs to the OSBP family. In terms of tissue distribution, expressed in roots, leaves, stems and flowers.

In terms of biological role, may be involved in the transport of sterols. This Arabidopsis thaliana (Mouse-ear cress) protein is Oxysterol-binding protein-related protein 2B (ORP2B).